The sequence spans 159 residues: Small ribosomal subunit protein bS6 (159 aa).

2 non-standard amino acids (selenocysteine) are found at residues U46 and U52.

Belongs to the bacterial ribosomal protein bS6 family.

Functionally, binds together with bS18 to 16S ribosomal RNA. This is Small ribosomal subunit protein bS6 from Desulfotalea psychrophila (strain LSv54 / DSM 12343).